The chain runs to 317 residues: Transaldolase (317 aa).

The active-site Schiff-base intermediate with substrate is the Lys-132.

This sequence belongs to the transaldolase family. Type 1 subfamily.

The protein localises to the cytoplasm. The catalysed reaction is D-sedoheptulose 7-phosphate + D-glyceraldehyde 3-phosphate = D-erythrose 4-phosphate + beta-D-fructose 6-phosphate. It functions in the pathway carbohydrate degradation; pentose phosphate pathway; D-glyceraldehyde 3-phosphate and beta-D-fructose 6-phosphate from D-ribose 5-phosphate and D-xylulose 5-phosphate (non-oxidative stage): step 2/3. Transaldolase is important for the balance of metabolites in the pentose-phosphate pathway. This Haemophilus influenzae (strain ATCC 51907 / DSM 11121 / KW20 / Rd) protein is Transaldolase.